We begin with the raw amino-acid sequence, 592 residues long: V-type ATP synthase alpha chain (592 aa).

233–240 (GPFGSGKT) contacts ATP.

The protein belongs to the ATPase alpha/beta chains family.

The enzyme catalyses ATP + H2O + 4 H(+)(in) = ADP + phosphate + 5 H(+)(out). Produces ATP from ADP in the presence of a proton gradient across the membrane. The V-type alpha chain is a catalytic subunit. This Clostridium botulinum (strain Loch Maree / Type A3) protein is V-type ATP synthase alpha chain.